A 348-amino-acid chain; its full sequence is Phospho-2-dehydro-3-deoxyheptonate aldolase, Trp-sensitive (348 aa).

It belongs to the class-I DAHP synthase family.

It carries out the reaction D-erythrose 4-phosphate + phosphoenolpyruvate + H2O = 7-phospho-2-dehydro-3-deoxy-D-arabino-heptonate + phosphate. It functions in the pathway metabolic intermediate biosynthesis; chorismate biosynthesis; chorismate from D-erythrose 4-phosphate and phosphoenolpyruvate: step 1/7. Its function is as follows. Stereospecific condensation of phosphoenolpyruvate (PEP) and D-erythrose-4-phosphate (E4P) giving rise to 3-deoxy-D-arabino-heptulosonate-7-phosphate (DAHP). The polypeptide is Phospho-2-dehydro-3-deoxyheptonate aldolase, Trp-sensitive (aroH) (Salmonella typhimurium (strain LT2 / SGSC1412 / ATCC 700720)).